Here is a 515-residue protein sequence, read N- to C-terminus: 1-pyrroline-5-carboxylate dehydrogenase 2 (515 aa).

Catalysis depends on residues E286 and C320.

The protein belongs to the aldehyde dehydrogenase family. RocA subfamily.

The catalysed reaction is L-glutamate 5-semialdehyde + NAD(+) + H2O = L-glutamate + NADH + 2 H(+). Its pathway is amino-acid degradation; L-proline degradation into L-glutamate; L-glutamate from L-proline: step 2/2. This is 1-pyrroline-5-carboxylate dehydrogenase 2 (rocA2) from Halalkalibacterium halodurans (strain ATCC BAA-125 / DSM 18197 / FERM 7344 / JCM 9153 / C-125) (Bacillus halodurans).